The chain runs to 871 residues: Pentatricopeptide repeat-containing protein At3g06920 (871 aa).

PPR repeat units lie at residues 97 to 131 (CPES…GFGP), 132 to 166 (SVNT…KFRP), 167 to 201 (AFSA…GYEP), 202 to 236 (TVHL…SLDA), 237 to 271 (DIVL…GLKP), 272 to 306 (DEVT…RRVP), 307 to 341 (CTYA…GSIP), 342 to 372 (SVIA…MKKD), 376 to 410 (NLST…GLFP), 411 to 445 (NVRT…VCTP), 446 to 480 (DEIT…DCRT), 481 to 515 (NSIV…NCSP), 516 to 550 (DLQL…RFVP), 551 to 585 (DARS…GCVL), 586 to 620 (DTRA…GFEP), 621 to 655 (TVVT…RIEL), 656 to 690 (NVVI…GLTP), 691 to 725 (NLYT…KCTP), 726 to 760 (NQVT…GMKP), 761 to 795 (STIS…GGVP), and 796 to 830 (DSAC…GLPI).

This sequence belongs to the PPR family. P subfamily.

This is Pentatricopeptide repeat-containing protein At3g06920 from Arabidopsis thaliana (Mouse-ear cress).